The following is a 103-amino-acid chain: Co-chaperonin GroES (103 aa).

It belongs to the GroES chaperonin family. Heptamer of 7 subunits arranged in a ring. Interacts with the chaperonin GroEL.

The protein localises to the cytoplasm. Functionally, together with the chaperonin GroEL, plays an essential role in assisting protein folding. The GroEL-GroES system forms a nano-cage that allows encapsulation of the non-native substrate proteins and provides a physical environment optimized to promote and accelerate protein folding. GroES binds to the apical surface of the GroEL ring, thereby capping the opening of the GroEL channel. The chain is Co-chaperonin GroES from Nostoc punctiforme (strain ATCC 29133 / PCC 73102).